We begin with the raw amino-acid sequence, 312 residues long: Malate dehydrogenase (312 aa).

Residues 12–17 and Asp36 contribute to the NAD(+) site; that span reads GAGFTG. The substrate site is built by Arg87 and Arg93. NAD(+) contacts are provided by residues Asn100 and 123–125; that span reads LTN. Substrate is bound at residue Asn125. The residue at position 149 (Ser149) is a Phosphoserine. Arg156 provides a ligand contact to substrate. His180 acts as the Proton acceptor in catalysis.

This sequence belongs to the LDH/MDH superfamily. MDH type 3 family.

The enzyme catalyses (S)-malate + NAD(+) = oxaloacetate + NADH + H(+). In terms of biological role, catalyzes the reversible oxidation of malate to oxaloacetate. The protein is Malate dehydrogenase of Bacillus cereus (strain ATCC 14579 / DSM 31 / CCUG 7414 / JCM 2152 / NBRC 15305 / NCIMB 9373 / NCTC 2599 / NRRL B-3711).